We begin with the raw amino-acid sequence, 542 residues long: Aminotriazole resistance protein (542 aa).

At 1 to 108 the chain is on the cytoplasmic side; it reads MGNQSLVVLT…SFGSEGNSKS (108 aa). A helical membrane pass occupies residues 109-129; that stretch reads WLMASFPLVSGSFILISGRLG. Topologically, residues 130-136 are extracellular; the sequence is DIYGLKK. Residues 137-157 traverse the membrane as a helical segment; that stretch reads MLLVGYVLVIIWSLICGITKY. At 158–172 the chain is on the cytoplasmic side; it reads SGSDTFFIISRAFQG. The helical transmembrane segment at 173-193 threads the bilayer; it reads LGIAFVLPNVLGIIGNIYVGG. At 194–198 the chain is on the extracellular side; it reads TFRKN. A helical membrane pass occupies residues 199-219; sequence IVISFVGAMAPIGATLGCLFA. Residues 220–231 lie on the Cytoplasmic side of the membrane; that stretch reads GLIGTEDPKQWP. The chain crosses the membrane as a helical span at residues 232 to 252; it reads WAFYAYSIAAFINFVLSIYAI. The Extracellular segment spans residues 253–262; sequence PSTIPTNIHH. Residues 263–283 traverse the membrane as a helical segment; that stretch reads FSMDWIGSVLGVIGLILLNFV. The Cytoplasmic segment spans residues 284–295; sequence WNQAPISGWNQA. The chain crosses the membrane as a helical span at residues 296 to 316; that stretch reads YIIVILIISVIFLVVFIIYEI. Over 317-333 the chain is Extracellular; it reads RFAKTPLLPRAVIKDRH. The helical transmembrane segment at 334-354 threads the bilayer; it reads MIQIMLALFFGWGSFGIFTFY. At 355–371 the chain is on the cytoplasmic side; the sequence is YFQFQLNIRQYTALWAG. The helical transmembrane segment at 372 to 392 threads the bilayer; that stretch reads GTYFMFLIWGIIAALLVGFTI. Residues 393-399 are Extracellular-facing; sequence KNVSPSV. Residues 400–420 traverse the membrane as a helical segment; sequence FLFFSMVAFNVGSIMASVTPV. Residues 421–429 are Cytoplasmic-facing; it reads HETYFRTQL. Residues 430–450 form a helical membrane-spanning segment; the sequence is GTMIILSFGMDLSFPASSIIF. The Extracellular portion of the chain corresponds to 451–505; the sequence is SDNLPMEYQGMAGSLVNTVVNYSMSLCLGMGATVETQVNSDGKHLLKGYRGAQYL. N471 is a glycosylation site (N-linked (GlcNAc...) asparagine). The helical transmembrane segment at 506–526 threads the bilayer; sequence GIGLASLACMISGLYMVESFI. Topologically, residues 527–542 are cytoplasmic; the sequence is KGRRARAAAEYDCTVA.

Belongs to the major facilitator superfamily.

It is found in the membrane. Its function is as follows. Putative component of the machinery responsible for pumping aminotriazole (and possibly other toxic compounds) out of the cell. Probable ATP-dependent export permease. Appears to confer resistance only to aminotriazole. The protein is Aminotriazole resistance protein (ATR1) of Saccharomyces cerevisiae (strain ATCC 204508 / S288c) (Baker's yeast).